The chain runs to 228 residues: PKHD-type hydroxylase Vapar_1809 (228 aa).

The 102-residue stretch at 78 to 179 folds into the Fe2OG dioxygenase domain; the sequence is QISPPLFNRY…RTASYFWIQS (102 aa). Residues His97, Asp99, and His160 each coordinate Fe cation. Arg170 contacts 2-oxoglutarate.

Requires Fe(2+) as cofactor. The cofactor is L-ascorbate.

This is PKHD-type hydroxylase Vapar_1809 from Variovorax paradoxus (strain S110).